The primary structure comprises 1472 residues: Type IV pilus biogenesis factor PilY1 homolog PD_1611 (1472 aa).

Ca(2+)-binding residues include Asp1170, Asp1172, Asp1174, Leu1176, and Asp1178. Polar residues predominate over residues Arg1383–Val1397. Positions Arg1383 to Ala1403 are disordered.

Belongs to the PilY1 family.

The protein localises to the fimbrium. Functionally, one of the three PilY1 homologs of X.fastidiosa, which are involved in bacterial twitching motility as component of the filamentous type IV pili (T4P). The twitching motility of this protein is enhanced by calcium, which may provide the bacterium an adaptive advantage in environments with high calcium concentrations. The polypeptide is Type IV pilus biogenesis factor PilY1 homolog PD_1611 (Xylella fastidiosa (strain Temecula1 / ATCC 700964)).